Reading from the N-terminus, the 875-residue chain is Lysine-specific demethylase JMJ26 (875 aa).

The segment at 31 to 103 (KPVEATSLSS…RSSVKKRATT (73 aa)) is disordered. The Nuclear localization signal signature appears at 62 to 69 (RKRSKADE). Basic and acidic residues predominate over residues 79–93 (KCDDENKCEENEKKQ). Positions 193, 196, 207, 210, 216, 219, 236, 239, 322, 325, 339, and 347 each coordinate Zn(2+). The segment at 193-240 (CHQCSKGERRYLFICTFCEVRLYCFPCIKKWYPHLSTDDILEKCPFCR) adopts an RING-type; degenerate zinc-finger fold. Residues 317–347 (EERVFCNHCATSIVDLHRSCPKCSYELCLNC) form a B box-type; degenerate zinc finger. The JmjC domain maps to 614-837 (PRSGILNIAT…ECLRLTDEFR (224 aa)). Fe cation-binding residues include H658, D660, and H805.

Belongs to the JARID1 histone demethylase family. Requires Fe(2+) as cofactor. In terms of tissue distribution, expressed in inflorescences, roots, siliques, leaves and stems.

It localises to the nucleus. Functionally, may function as histone H3 lysine demethylase and be involved in regulation of gene expression. The chain is Lysine-specific demethylase JMJ26 from Arabidopsis thaliana (Mouse-ear cress).